The sequence spans 380 residues: Opsin-2 (380 aa).

The Extracellular portion of the chain corresponds to 1-51 (MVNTTDFYPVPAAMAYESSVGLPLLGWNVPTEHLDLVHPHWRSFQVPNKYW). The N-linked (GlcNAc...) asparagine glycan is linked to asparagine 3. A helical transmembrane segment spans residues 52-76 (HFGLAFVYFMLMCMSSLGNGIVLWI). The Cytoplasmic portion of the chain corresponds to 77–88 (YATTKSIRTPSN). Residues 89–115 (MFIVNLALFDVLMLLEMPMLVVSSLFY) traverse the membrane as a helical segment. Topologically, residues 116 to 128 (QRPVGWELGCDIY) are extracellular. Cysteine 125 and cysteine 202 are joined by a disulfide. A helical membrane pass occupies residues 129-148 (AALGSVAGIGSAINNAAIAF). Over 149–166 (DRYRTISCPIDGRLTQGQ) the chain is Cytoplasmic. The chain crosses the membrane as a helical span at residues 167-191 (VLALIAGTWVWTLPFTLMPLLRIWS). Over 192–215 (RFTAEGFLTTCSFDYLTDDEDTKV) the chain is Extracellular. The helical transmembrane segment at 216–243 (FVGCIFAWSYAFPLCLICCFYYRLIGAV) threads the bilayer. Topologically, residues 244 to 279 (REHEKMLRDQAKKMNVKSLQSNADTEAQSAEIRIAK) are cytoplasmic. Residues 280–303 (VALTIFFLFLCSWTPYAVVAMIGA) traverse the membrane as a helical segment. Residues 304 to 311 (FGNRAALT) lie on the Extracellular side of the membrane. A helical membrane pass occupies residues 312-336 (PLSTMIPAVTAKIVSCIDPWVYAIN). At lysine 323 the chain carries N6-(retinylidene)lysine. Over 337–380 (HPRFRAEVQKRMKWLHLGEDARSSKSDTSSTATDRTVGNVSASA) the chain is Cytoplasmic. The disordered stretch occupies residues 358 to 380 (RSSKSDTSSTATDRTVGNVSASA). The span at 362-372 (SDTSSTATDRT) shows a compositional bias: low complexity.

This sequence belongs to the G-protein coupled receptor 1 family. Opsin subfamily. Post-translationally, phosphorylated on some or all of the serine and threonine residues present in the C-terminal region.

Its subcellular location is the membrane. Functionally, visual pigments are the light-absorbing molecules that mediate vision. They consist of an apoprotein, opsin, covalently linked to cis-retinal. The protein is Opsin-2 (Lo2) of Schistocerca gregaria (Desert locust).